Consider the following 430-residue polypeptide: Trigger factor (430 aa).

The PPIase FKBP-type domain maps to 163–248 (GNIAIIDFKG…IKDIKVKELP (86 aa)).

The protein belongs to the FKBP-type PPIase family. Tig subfamily.

It localises to the cytoplasm. The enzyme catalyses [protein]-peptidylproline (omega=180) = [protein]-peptidylproline (omega=0). Its function is as follows. Involved in protein export. Acts as a chaperone by maintaining the newly synthesized protein in an open conformation. Functions as a peptidyl-prolyl cis-trans isomerase. This chain is Trigger factor, found in Clostridium botulinum (strain ATCC 19397 / Type A).